The sequence spans 330 residues: Phosphate acyltransferase (330 aa).

This sequence belongs to the PlsX family. In terms of assembly, homodimer. Probably interacts with PlsY.

Its subcellular location is the cytoplasm. It carries out the reaction a fatty acyl-[ACP] + phosphate = an acyl phosphate + holo-[ACP]. Its pathway is lipid metabolism; phospholipid metabolism. Catalyzes the reversible formation of acyl-phosphate (acyl-PO(4)) from acyl-[acyl-carrier-protein] (acyl-ACP). This enzyme utilizes acyl-ACP as fatty acyl donor, but not acyl-CoA. The protein is Phosphate acyltransferase of Streptococcus agalactiae serotype III (strain NEM316).